Here is a 125-residue protein sequence, read N- to C-terminus: Large ribosomal subunit protein bL12 (125 aa).

Belongs to the bacterial ribosomal protein bL12 family. As to quaternary structure, homodimer. Part of the ribosomal stalk of the 50S ribosomal subunit. Forms a multimeric L10(L12)X complex, where L10 forms an elongated spine to which 2 to 4 L12 dimers bind in a sequential fashion. Binds GTP-bound translation factors.

In terms of biological role, forms part of the ribosomal stalk which helps the ribosome interact with GTP-bound translation factors. Is thus essential for accurate translation. The sequence is that of Large ribosomal subunit protein bL12 from Methylobacterium radiotolerans (strain ATCC 27329 / DSM 1819 / JCM 2831 / NBRC 15690 / NCIMB 10815 / 0-1).